Reading from the N-terminus, the 246-residue chain is Neurotrophic factor BDNF precursor form (246 aa).

Positions M1 to A18 are cleaved as a signal peptide. Residues A19 to R127 constitute a propeptide that is removed on maturation. N120 carries N-linked (GlcNAc...) asparagine glycosylation. Cystine bridges form between C140-C207, C185-C236, and C195-C238.

The protein belongs to the NGF-beta family.

It localises to the secreted. In terms of biological role, important signaling molecule that activates signaling cascades downstream of NTRK2. During development, promotes the survival and differentiation of selected neuronal populations of the peripheral and central nervous systems. Participates in axonal growth, pathfinding and in the modulation of dendritic growth and morphology. Major regulator of synaptic transmission and plasticity at adult synapses in many regions of the CNS. The versatility of BDNF is emphasized by its contribution to a range of adaptive neuronal responses including long-term potentiation (LTP), long-term depression (LTD), certain forms of short-term synaptic plasticity, as well as homeostatic regulation of intrinsic neuronal excitability. The chain is Neurotrophic factor BDNF precursor form (BDNF) from Gallus gallus (Chicken).